The chain runs to 298 residues: MQTIATPSLPLGQRLAAFSHLCKPRVNSLIVFTAMIGMCLATPDFPPLLRFGVASLGIALVSFAAAALNCLVERTVDAKMARTSWRATARGDISPLETVTLATALGAAGLWLLHGFINDLTMWLTLATFVGYTVIYTLILKPATPMNIVIGGASGAMPPLLGWTAMTGQVSAEPLVLFLIIFLWTPPHFWALACYRRDDYACSGLPMLPVTHGIAFTCQHILWYTLMLAAASLIPVSLGMSGGFYLIAIGLLDLVFLGYAIALCRRYSDALARRTFRYSILYLTLLFAALFADRLIVL.

Transmembrane regions (helical) follow at residues 29 to 49, 51 to 71, 97 to 117, 120 to 140, 148 to 168, 175 to 195, 221 to 241, 243 to 263, and 278 to 298; these read LIVFTAMIGMCLATPDFPPLL, FGVASLGIALVSFAAAALNCL, ETVTLATALGAAGLWLLHGFI, LTMWLTLATFVGYTVIYTLIL, IVIGGASGAMPPLLGWTAMTG, LVLFLIIFLWTPPHFWALACY, ILWYTLMLAAASLIPVSLGMS, GFYLIAIGLLDLVFLGYAIAL, and YSILYLTLLFAALFADRLIVL.

It belongs to the UbiA prenyltransferase family. Protoheme IX farnesyltransferase subfamily.

The protein resides in the cell inner membrane. It catalyses the reaction heme b + (2E,6E)-farnesyl diphosphate + H2O = Fe(II)-heme o + diphosphate. Its pathway is porphyrin-containing compound metabolism; heme O biosynthesis; heme O from protoheme: step 1/1. Converts heme B (protoheme IX) to heme O by substitution of the vinyl group on carbon 2 of heme B porphyrin ring with a hydroxyethyl farnesyl side group. In Dechloromonas aromatica (strain RCB), this protein is Protoheme IX farnesyltransferase.